A 73-amino-acid polypeptide reads, in one-letter code: Conotoxin Cl9.2 (73 aa).

Positions 1–18 are cleaved as a signal peptide; that stretch reads MSKLVILAVLVLLPLVTA. A propeptide spanning residues 19–41 is cleaved from the precursor; the sequence is EHGRDEQAMQPEKKTMWTLWSLT. 3 disulfide bridges follow: C46–C61, C52–C63, and C58–C72.

In terms of tissue distribution, expressed by the venom duct.

The protein resides in the secreted. The protein is Conotoxin Cl9.2 of Californiconus californicus (California cone).